The chain runs to 296 residues: tRNA dimethylallyltransferase (296 aa).

11-18 (GPTAVGKT) serves as a coordination point for ATP. 13 to 18 (TAVGKT) serves as a coordination point for substrate. Residues 36–39 (DSQQ) are interaction with substrate tRNA.

It belongs to the IPP transferase family. In terms of assembly, monomer. Mg(2+) is required as a cofactor.

The enzyme catalyses adenosine(37) in tRNA + dimethylallyl diphosphate = N(6)-dimethylallyladenosine(37) in tRNA + diphosphate. Its function is as follows. Catalyzes the transfer of a dimethylallyl group onto the adenine at position 37 in tRNAs that read codons beginning with uridine, leading to the formation of N6-(dimethylallyl)adenosine (i(6)A). This is tRNA dimethylallyltransferase from Streptococcus equi subsp. zooepidemicus (strain H70).